The sequence spans 203 residues: Interferon type B (203 aa).

An N-terminal signal peptide occupies residues 1 to 27 (MTANHQSPGMHSILLLLLLPALTTTFS). 2 disulfides stabilise this stretch: Cys28/Cys125 and Cys57/Cys164. Asn37 and Asn160 each carry an N-linked (GlcNAc...) asparagine glycan.

This sequence belongs to the alpha/beta interferon family.

Its subcellular location is the secreted. Its function is as follows. Has antiviral activities. In Gallus gallus (Chicken), this protein is Interferon type B (IFNB).